The sequence spans 129 residues: Large ribosomal subunit protein uL22 (129 aa).

The protein belongs to the universal ribosomal protein uL22 family. In terms of assembly, part of the 50S ribosomal subunit.

Its function is as follows. This protein binds specifically to 23S rRNA; its binding is stimulated by other ribosomal proteins, e.g. L4, L17, and L20. It is important during the early stages of 50S assembly. It makes multiple contacts with different domains of the 23S rRNA in the assembled 50S subunit and ribosome. Functionally, the globular domain of the protein is located near the polypeptide exit tunnel on the outside of the subunit, while an extended beta-hairpin is found that lines the wall of the exit tunnel in the center of the 70S ribosome. The chain is Large ribosomal subunit protein uL22 from Rhizobium meliloti (strain 1021) (Ensifer meliloti).